Here is a 1134-residue protein sequence, read N- to C-terminus: DNA damage-binding protein 1 (1134 aa).

This sequence belongs to the DDB1 family. As to quaternary structure, interacts with cdt-1 and cul-4. Expressed at high levels in the spermatheca of adult hermaphrodites.

It is found in the cytoplasm. The protein localises to the nucleus. It functions in the pathway protein modification; protein ubiquitination. Its function is as follows. Plays a role in DNA repair. May be a component of an E3 ubiquitin-protein ligase which promotes histone ubiquitination in response to UV irradiation. Histone ubiquitination may be important for subsequent DNA repair. Promotes the degradation of the replication licensing factor cdt-1 during S-phase, thereby preventing rereplication of DNA during a single round of cell division. This chain is DNA damage-binding protein 1 (ddb-1), found in Caenorhabditis elegans.